The primary structure comprises 533 residues: Probable galacturonosyltransferase 13 (533 aa).

The Cytoplasmic portion of the chain corresponds to 1-40 (MQLHISPSMRSITISSSNEFIDLMKIKVAARHISYRTLFH). Residues 41–61 (TILILAFLLPFVFILTAVVTL) traverse the membrane as a helical; Signal-anchor for type II membrane protein segment. Topologically, residues 62–533 (EGVNKCSSFD…DFIKNCHILE (472 aa)) are lumenal. N306, N396, N445, and N520 each carry an N-linked (GlcNAc...) asparagine glycan.

The protein belongs to the glycosyltransferase 8 family. As to expression, expressed in roots, inflorescences, siliques, leaves and stems. Accumulates in pollen grains.

Its subcellular location is the golgi apparatus membrane. Its pathway is glycan metabolism; pectin biosynthesis. Its function is as follows. May be involved in pectin and/or xylans biosynthesis in cell walls. Together with GAUT14, required for pollen tube growth, possibly through the regulation of pectin biosynthesis and repartition in the pollen tube wall. This chain is Probable galacturonosyltransferase 13, found in Arabidopsis thaliana (Mouse-ear cress).